An 867-amino-acid chain; its full sequence is E3 ubiquitin-protein ligase SH3RF1 (867 aa).

Residues 12–53 (CPVCLERLDATAKVLPCQHTFCRRCLLGIVGSRGELRCPECR) form an RING-type zinc finger. Positions 101–127 (AQGAGGSQRDPGPTGGQSQRVQAKSTP) are disordered. Residues 116-125 (GQSQRVQAKS) show a composition bias toward polar residues. 2 consecutive SH3 domains span residues 132–191 (PQLP…VIKP) and 194–257 (QPPP…FNSA). Positions 265-328 (DKPSEGGGDS…PPPQRHSMEI (64 aa)) are disordered. Over residues 275–285 (SEGPSSSSSGP) the composition is skewed to low complexity. In terms of domain architecture, SH3 3 spans 436-497 (QRPTVYVAMF…PGNYMSPVSR (62 aa)). The segment at 706–794 (LSNKKKLRPS…APIAPPPRQP (89 aa)) is disordered. A compositionally biased stretch (low complexity) spans 760–769 (SELSMSSSSS). Polar residues predominate over residues 770–784 (NTDAVTHRSSPQDNT). The region spanning 808–867 (IVCERYRVVVSYPPQSEAELELKEGDIVFVHKKREDGWFKGTLQRNGRTGLFPGSFVDSI) is the SH3 4 domain.

The protein belongs to the SH3RF family. In terms of processing, autoubiquitinated. Ubiquitinated by SH3RF2, leading to proteasome-mediated degradation.

It is found in the cytoplasm. The protein localises to the perinuclear region. It localises to the cell projection. The protein resides in the lamellipodium. Its subcellular location is the golgi apparatus. It is found in the trans-Golgi network. The enzyme catalyses S-ubiquitinyl-[E2 ubiquitin-conjugating enzyme]-L-cysteine + [acceptor protein]-L-lysine = [E2 ubiquitin-conjugating enzyme]-L-cysteine + N(6)-ubiquitinyl-[acceptor protein]-L-lysine.. It participates in protein modification; protein ubiquitination. Functionally, has E3 ubiquitin-protein ligase activity. In the absence of an external substrate, it can catalyze self-ubiquitination. Acts as a scaffold protein that contributes to the effective activation of the JNK signaling pathway. This Danio rerio (Zebrafish) protein is E3 ubiquitin-protein ligase SH3RF1 (sh3rf1).